We begin with the raw amino-acid sequence, 334 residues long: Ribonucleoside-diphosphate reductase small chain (334 aa).

Fe cation is bound by residues D77, E108, and H111. The active site involves Y115. Fe cation contacts are provided by E171, E205, and H208.

It belongs to the ribonucleoside diphosphate reductase small chain family. As to quaternary structure, heterotetramer composed of a homodimer of the large subunit (R1) and a homodimer of the small subunit (R2). Larger multisubunit protein complex are also active, composed of (R1)n(R2)n. Fe cation serves as cofactor.

It catalyses the reaction a 2'-deoxyribonucleoside 5'-diphosphate + [thioredoxin]-disulfide + H2O = a ribonucleoside 5'-diphosphate + [thioredoxin]-dithiol. Its function is as follows. Ribonucleoside-diphosphate reductase holoenzyme provides the precursors necessary for viral DNA synthesis. Allows virus growth in non-dividing cells. Catalyzes the biosynthesis of deoxyribonucleotides from the corresponding ribonucleotides. The protein is Ribonucleoside-diphosphate reductase small chain of Ornithodoros (relapsing fever ticks).